A 316-amino-acid polypeptide reads, in one-letter code: Protease HtpX homolog (316 aa).

Residues 16-36 (LFMGAGFLIGGATGMMIALVF) form a helical membrane-spanning segment. Residue His134 participates in Zn(2+) binding. Glu135 is a catalytic residue. His138 lines the Zn(2+) pocket. 2 helical membrane passes run 149–169 (VTATIAGAISALANFAFFFGG) and 180–200 (LGGMIGAILIAILAPIAAMLV). Residue Glu209 participates in Zn(2+) binding. The tract at residues 295-316 (PVMAATTSSSVPLSGERGGPWS) is disordered.

Belongs to the peptidase M48B family. Zn(2+) is required as a cofactor.

The protein resides in the cell inner membrane. The protein is Protease HtpX homolog of Caulobacter vibrioides (strain ATCC 19089 / CIP 103742 / CB 15) (Caulobacter crescentus).